Here is a 399-residue protein sequence, read N- to C-terminus: Probable sugar efflux transporter (399 aa).

Transmembrane regions (helical) follow at residues 15–35, 50–70, 81–101, 103–123, 136–156, 168–188, 209–229, 246–266, 273–293, 301–321, 333–353, and 364–384; these read VVTL…PVGL, VGMM…PFML, LIGL…AWNF, VLVI…SITS, AQAL…GIPI, MTFL…VKLL, PALV…YTAY, FATV…ILFG, ASGL…LLLP, LMLL…GMQV, VAMS…ALVG, and SVGY…LMIF.

This sequence belongs to the major facilitator superfamily. SotB (TC 2.A.1.2) family.

It localises to the cell inner membrane. Functionally, involved in the efflux of sugars. The physiological role may be the reduction of the intracellular concentration of toxic sugars or sugar metabolites. The sequence is that of Probable sugar efflux transporter from Klebsiella pneumoniae subsp. pneumoniae (strain ATCC 700721 / MGH 78578).